Consider the following 107-residue polypeptide: Integration host factor subunit beta (107 aa).

The interval 87-107 (RERVNNGTRKNGGSADAASGG) is disordered.

This sequence belongs to the bacterial histone-like protein family. In terms of assembly, heterodimer of an alpha and a beta chain.

In terms of biological role, this protein is one of the two subunits of integration host factor, a specific DNA-binding protein that functions in genetic recombination as well as in transcriptional and translational control. This is Integration host factor subunit beta from Granulibacter bethesdensis (strain ATCC BAA-1260 / CGDNIH1).